Consider the following 423-residue polypeptide: Lipid droplet-regulating VLDL assembly factor AUP1 (423 aa).

Residues 1–19 lie on the Cytoplasmic side of the membrane; that stretch reads METRGIEQMFDFQRLPNDR. An intramembrane segment occupies 20–40; sequence FILLLLLLYAPVGFCLMLLRI. Residues 41 to 423 are Cytoplasmic-facing; the sequence is FIGVHVFLVS…KHGLNKEDDL (383 aa). Residues 304–346 enclose the CUE domain; that stretch reads RIARLAQQVKEVLPDVPVSVITRDLLQTNCVDTTITNLLERTD. The interval 355 to 392 is disordered; sequence TMPSGPGKAAASSTPSAMVSSPNLKPAAKSFGRSPIDR. Over residues 365-377 the composition is skewed to polar residues; sequence ASSTPSAMVSSPN.

The protein belongs to the AUP1 family.

It localises to the endoplasmic reticulum membrane. Its subcellular location is the lipid droplet. Its function is as follows. Plays a role in the translocation of terminally misfolded proteins from the endoplasmic reticulum lumen to the cytoplasm and their degradation by the proteasome. Plays a role in lipid droplet formation. Induces lipid droplet clustering. In Danio rerio (Zebrafish), this protein is Lipid droplet-regulating VLDL assembly factor AUP1.